Reading from the N-terminus, the 501-residue chain is Lysine--tRNA ligase (501 aa).

Positions 411 and 418 each coordinate Mg(2+).

This sequence belongs to the class-II aminoacyl-tRNA synthetase family. In terms of assembly, homodimer. Mg(2+) serves as cofactor.

It is found in the cytoplasm. The catalysed reaction is tRNA(Lys) + L-lysine + ATP = L-lysyl-tRNA(Lys) + AMP + diphosphate. This chain is Lysine--tRNA ligase, found in Aliivibrio fischeri (strain ATCC 700601 / ES114) (Vibrio fischeri).